The sequence spans 71 residues: UPF0434 protein Csal_1588 (71 aa).

The protein belongs to the UPF0434 family.

In Chromohalobacter salexigens (strain ATCC BAA-138 / DSM 3043 / CIP 106854 / NCIMB 13768 / 1H11), this protein is UPF0434 protein Csal_1588.